The primary structure comprises 59 residues: Large ribosomal subunit protein bL32c (59 aa).

Residues 1–20 are disordered; it reads MAVPKKRTSKSKKRIRKSVW.

The protein belongs to the bacterial ribosomal protein bL32 family.

It is found in the plastid. The protein localises to the chloroplast. In Angiopteris evecta (Mule's foot fern), this protein is Large ribosomal subunit protein bL32c.